Here is a 625-residue protein sequence, read N- to C-terminus: Very-long-chain aldehyde decarbonylase CER1 (625 aa).

5 consecutive transmembrane segments (helical) span residues 45–65 (LGYF…QVWI), 126–146 (GVLM…YWLH), 177–197 (PFAE…TTLL), 200–220 (TASI…NNMG), and 329–349 (LLWP…RLFV). Residues 138-272 (VEFLYYWLHK…MPLYDYIYGT (135 aa)) form the Fatty acid hydroxylase domain.

The protein belongs to the sterol desaturase family. As to quaternary structure, homodimer. Interacts with CER3, CYTB5-B, CYTB5-C, CYTB5-D and CYTB5-E. Expressed in seedlings, stems, leaves, flowers, fruits and siliques. Not detected in roots, pollen and seeds. Expressed in trichomes, cotyledons, shoot apical meristem and leaf primordia. Preferentially associated with young leaves rather than mature leaves. Expressed in the epidermis of the stem and caulines leaves, in the carpels and the sepals.

The protein resides in the endoplasmic reticulum membrane. The catalysed reaction is a long-chain fatty aldehyde + 2 NADPH + O2 + H(+) = a long-chain alkane + formate + 2 NADP(+) + H2O. Its function is as follows. Aldehyde decarbonylase involved in the conversion of aldehydes to alkanes. Core component of a very-long-chain alkane synthesis complex. Involved in epicuticular wax biosynthesis and pollen fertility. The polypeptide is Very-long-chain aldehyde decarbonylase CER1 (CER1) (Arabidopsis thaliana (Mouse-ear cress)).